We begin with the raw amino-acid sequence, 190 residues long: NADH-ubiquinone oxidoreductase chain 5 (190 aa).

Helical transmembrane passes span 1 to 21 (MVIS…CLIV), 68 to 88 (INIL…FVGL), 94 to 114 (NVTF…SILF), 118 to 138 (FIVF…FSLL), 146 to 166 (NVFL…CSNS), and 167 to 187 (LFLL…LIKM).

Belongs to the complex I subunit 5 family.

The protein localises to the mitochondrion inner membrane. It carries out the reaction a ubiquinone + NADH + 5 H(+)(in) = a ubiquinol + NAD(+) + 4 H(+)(out). In terms of biological role, core subunit of the mitochondrial membrane respiratory chain NADH dehydrogenase (Complex I) that is believed to belong to the minimal assembly required for catalysis. Complex I functions in the transfer of electrons from NADH to the respiratory chain. The immediate electron acceptor for the enzyme is believed to be ubiquinone. In Arbacia lixula (Black urchin), this protein is NADH-ubiquinone oxidoreductase chain 5 (ND5).